We begin with the raw amino-acid sequence, 575 residues long: Preprotein translocase subunit SCY2, chloroplastic (575 aa).

A chloroplast-targeting transit peptide spans 1–34 (MNSSQACFFHFSLRPISLSHPSYAFLSKRDPFLC). The next 10 membrane-spanning stretches (helical) occupy residues 157–177 (FVTA…LPGF), 206–226 (LSLF…MQVL), 251–271 (IWWL…YTSL), 285–305 (VMMT…LCDT), 306–326 (ISES…ILTG), 346–366 (LPYL…AVVV), 414–434 (TTYL…PFLL), 447–467 (GAPP…FNIF), 509–529 (FWGG…DHYL), and 531–551 (SINQ…GSII).

It belongs to the SecY/SEC61-alpha family. In terms of assembly, part of a second Sec protein translocation apparatus. Interacts probably with SECA2. As to expression, ubiquitous.

The protein resides in the plastid. It is found in the chloroplast membrane. Its subcellular location is the amyloplast membrane. It localises to the chloroplast thylakoid membrane. Its function is as follows. Involved in protein export. Probably interacts with other proteins to allow the postimport or conservative sorting pathway for inner membrane proteins in plastids. Central subunit of the protein translocation channel SecYE. Consists of two halves formed by TMs 1-5 and 6-10. These two domains form a lateral gate at the front which open onto the bilayer between TMs 2 and 7, and are clamped together by SecE at the back. The channel is closed by both a pore ring composed of hydrophobic SecY resides and a short helix (helix 2A) on the extracellular side of the membrane which forms a plug. The polypeptide is Preprotein translocase subunit SCY2, chloroplastic (SCY2) (Arabidopsis thaliana (Mouse-ear cress)).